A 151-amino-acid chain; its full sequence is Deoxyuridine 5'-triphosphate nucleotidohydrolase (151 aa).

Substrate contacts are provided by residues 70–72 (RSG), N83, 87–89 (LID), and M97.

This sequence belongs to the dUTPase family. The cofactor is Mg(2+).

The catalysed reaction is dUTP + H2O = dUMP + diphosphate + H(+). Its pathway is pyrimidine metabolism; dUMP biosynthesis; dUMP from dCTP (dUTP route): step 2/2. This enzyme is involved in nucleotide metabolism: it produces dUMP, the immediate precursor of thymidine nucleotides and it decreases the intracellular concentration of dUTP so that uracil cannot be incorporated into DNA. The protein is Deoxyuridine 5'-triphosphate nucleotidohydrolase of Pseudomonas aeruginosa (strain UCBPP-PA14).